The following is a 137-amino-acid chain: Ribonuclease VapC18 (137 aa).

The PINc domain occupies 4–126 (CVDTSAWHHA…YDRVAAITGQ (123 aa)). Mg(2+) is bound by residues Asp6 and Asp96.

The protein belongs to the PINc/VapC protein family. Requires Mg(2+) as cofactor.

In terms of biological role, toxic component of a type II toxin-antitoxin (TA) system. An RNase. The cognate antitoxin is VapB18. The polypeptide is Ribonuclease VapC18 (Mycobacterium tuberculosis (strain ATCC 25618 / H37Rv)).